We begin with the raw amino-acid sequence, 235 residues long: Transmembrane protein 215 (235 aa).

The next 2 membrane-spanning stretches (helical) occupy residues 12-32 (LVVALVSVFLVFGFMFTVSGM) and 40-60 (IPLLAIGPAICLPGIAAIALA). A disordered region spans residues 99 to 145 (SDLESGKGSSDELAKKAGLRGKPPPQSQGEVSVASSINSPTPTEEGE). Positions 125 to 140 (SQGEVSVASSINSPTP) are enriched in polar residues.

Its subcellular location is the membrane. In Homo sapiens (Human), this protein is Transmembrane protein 215 (TMEM215).